A 637-amino-acid polypeptide reads, in one-letter code: MAKHSQHSSPPRKLFDTLNDLWQRAKSEAGLSAEGPEGTRRRNNLILYLLLVLSTLYLLNGYQTLRNEEIPYSEFLKAVAEGRVEQAVVTEQTISGTLKPEAEGESTRPFITVPLWNHELAAELEKKGVKYTVRYGSNWFSSLIFNWIVPIVLLTLFWTWMARRMTGGRGFLSIGKKTRIQADTAAKVTFGDVAGADEAKQELRETIEFLQNPTRIQSLGGRMPKGVLLVGPPGTGKTLLARAVAGEAGVPFFNISGSEFIELFVGVGAARVRDLFEQARQNAPCIIFIDELDAIGRSRGGPVVMGGHDEREQTLNQLLTEMDGFDPSVGVAVMAATNRPEILDKALLRSGRFDRQIVVDKPGLEDRVSILKLHTRKMKLAADVDLRVVAQRTPGFVGADLANAANEAAIIAVRANKAAIGMADFEAAIDRILAGPEKKSRLLNDAEKHRVAVHESGHALVAEIVPTGQPVHKVSIIPRGAAALGFTLQLPVEEKFLSTEQELKDQIAILLGGRTAEELVFGESSSGAQNDLEKASEIARTMVCSLGMSKVLGPLTYGRRQQLAYLSVEGAEERNFSEETARLIDNEVRKLIEEGLQRVREILTHHRVTLDRLAALLREKEVVSGEDVKAVIREAAS.

Topologically, residues 1–44 are cytoplasmic; the sequence is MAKHSQHSSPPRKLFDTLNDLWQRAKSEAGLSAEGPEGTRRRNN. A helical transmembrane segment spans residues 45–65; sequence LILYLLLVLSTLYLLNGYQTL. Topologically, residues 66-141 are periplasmic; that stretch reads RNEEIPYSEF…TVRYGSNWFS (76 aa). A helical membrane pass occupies residues 142-162; it reads SLIFNWIVPIVLLTLFWTWMA. Residues 163–637 lie on the Cytoplasmic side of the membrane; that stretch reads RRMTGGRGFL…VKAVIREAAS (475 aa). 231–238 serves as a coordination point for ATP; that stretch reads GPPGTGKT. His-454 provides a ligand contact to Zn(2+). The active site involves Glu-455. 2 residues coordinate Zn(2+): His-458 and Asp-531.

This sequence in the central section; belongs to the AAA ATPase family. In the C-terminal section; belongs to the peptidase M41 family. As to quaternary structure, homohexamer. It depends on Zn(2+) as a cofactor.

It is found in the cell inner membrane. Functionally, acts as a processive, ATP-dependent zinc metallopeptidase for both cytoplasmic and membrane proteins. Plays a role in the quality control of integral membrane proteins. The polypeptide is ATP-dependent zinc metalloprotease FtsH (Methylococcus capsulatus (strain ATCC 33009 / NCIMB 11132 / Bath)).